Reading from the N-terminus, the 125-residue chain is Large ribosomal subunit protein bL12 (125 aa).

It belongs to the bacterial ribosomal protein bL12 family. As to quaternary structure, homodimer. Part of the ribosomal stalk of the 50S ribosomal subunit. Forms a multimeric L10(L12)X complex, where L10 forms an elongated spine to which 2 to 4 L12 dimers bind in a sequential fashion. Binds GTP-bound translation factors.

Its function is as follows. Forms part of the ribosomal stalk which helps the ribosome interact with GTP-bound translation factors. Is thus essential for accurate translation. The polypeptide is Large ribosomal subunit protein bL12 (Syntrophomonas wolfei subsp. wolfei (strain DSM 2245B / Goettingen)).